Reading from the N-terminus, the 268-residue chain is Ribosomal RNA small subunit methyltransferase A (268 aa).

Residues N23, I25, G50, E72, D97, and N116 each contribute to the S-adenosyl-L-methionine site.

It belongs to the class I-like SAM-binding methyltransferase superfamily. rRNA adenine N(6)-methyltransferase family. RsmA subfamily.

Its subcellular location is the cytoplasm. It carries out the reaction adenosine(1518)/adenosine(1519) in 16S rRNA + 4 S-adenosyl-L-methionine = N(6)-dimethyladenosine(1518)/N(6)-dimethyladenosine(1519) in 16S rRNA + 4 S-adenosyl-L-homocysteine + 4 H(+). Functionally, specifically dimethylates two adjacent adenosines (A1518 and A1519) in the loop of a conserved hairpin near the 3'-end of 16S rRNA in the 30S particle. May play a critical role in biogenesis of 30S subunits. In Rickettsia prowazekii (strain Madrid E), this protein is Ribosomal RNA small subunit methyltransferase A.